A 540-amino-acid chain; its full sequence is Phosphoenolpyruvate carboxykinase (ATP) (540 aa).

Arginine 65 is a substrate binding site. Lysine 87 carries the post-translational modification N6-acetyllysine. Substrate is bound by residues tyrosine 207 and lysine 213. Residues lysine 213, histidine 232, and 248 to 256 each bind ATP; that span reads GLSGTGKTT. The Mn(2+) site is built by lysine 213 and histidine 232. Aspartate 269 is a Mn(2+) binding site. Residues glutamate 297, arginine 333, 449-450, and threonine 455 each bind ATP; that span reads RI. Arginine 333 contacts substrate. Position 523 is an N6-acetyllysine (lysine 523).

The protein belongs to the phosphoenolpyruvate carboxykinase (ATP) family. As to quaternary structure, monomer. Mn(2+) serves as cofactor.

The protein resides in the cytoplasm. The enzyme catalyses oxaloacetate + ATP = phosphoenolpyruvate + ADP + CO2. Its pathway is carbohydrate biosynthesis; gluconeogenesis. Its function is as follows. Involved in the gluconeogenesis. Catalyzes the conversion of oxaloacetate (OAA) to phosphoenolpyruvate (PEP) through direct phosphoryl transfer between the nucleoside triphosphate and OAA. This chain is Phosphoenolpyruvate carboxykinase (ATP), found in Escherichia coli O7:K1 (strain IAI39 / ExPEC).